Here is a 371-residue protein sequence, read N- to C-terminus: Queuine tRNA-ribosyltransferase (371 aa).

The Proton acceptor role is filled by aspartate 90. Residues 90–94, aspartate 144, glutamine 189, and glycine 215 contribute to the substrate site; that span reads DSGGF. An RNA binding region spans residues 246–252; the sequence is GVGTPEN. Aspartate 265 functions as the Nucleophile in the catalytic mechanism. The tract at residues 270–274 is RNA binding; important for wobble base 34 recognition; it reads TRNAR. Cysteine 303, cysteine 305, cysteine 308, and histidine 334 together coordinate Zn(2+).

This sequence belongs to the queuine tRNA-ribosyltransferase family. In terms of assembly, homodimer. Within each dimer, one monomer is responsible for RNA recognition and catalysis, while the other monomer binds to the replacement base PreQ1. It depends on Zn(2+) as a cofactor.

It carries out the reaction 7-aminomethyl-7-carbaguanine + guanosine(34) in tRNA = 7-aminomethyl-7-carbaguanosine(34) in tRNA + guanine. It functions in the pathway tRNA modification; tRNA-queuosine biosynthesis. Its function is as follows. Catalyzes the base-exchange of a guanine (G) residue with the queuine precursor 7-aminomethyl-7-deazaguanine (PreQ1) at position 34 (anticodon wobble position) in tRNAs with GU(N) anticodons (tRNA-Asp, -Asn, -His and -Tyr). Catalysis occurs through a double-displacement mechanism. The nucleophile active site attacks the C1' of nucleotide 34 to detach the guanine base from the RNA, forming a covalent enzyme-RNA intermediate. The proton acceptor active site deprotonates the incoming PreQ1, allowing a nucleophilic attack on the C1' of the ribose to form the product. After dissociation, two additional enzymatic reactions on the tRNA convert PreQ1 to queuine (Q), resulting in the hypermodified nucleoside queuosine (7-(((4,5-cis-dihydroxy-2-cyclopenten-1-yl)amino)methyl)-7-deazaguanosine). This is Queuine tRNA-ribosyltransferase from Helicobacter acinonychis (strain Sheeba).